We begin with the raw amino-acid sequence, 501 residues long: DDB1- and CUL4-associated factor 12-like protein 1 (501 aa).

Over residues 1-37 (MRQADSQTQPSPAEQETPQPAGPSNRSPPTMGPQQTG) the composition is skewed to polar residues. The segment at 1-67 (MRQADSQTQP…PAAPMATAGE (67 aa)) is disordered. WD repeat units follow at residues 185–225 (PPSC…PVCL), 230–268 (GHRD…FNGS), 298–337 (PGNR…SRLL), and 384–423 (SREG…FLEE).

This sequence belongs to the WD repeat DCAF12 family.

The sequence is that of DDB1- and CUL4-associated factor 12-like protein 1 (Dcaf12l1) from Mus musculus (Mouse).